We begin with the raw amino-acid sequence, 406 residues long: Pygopus homolog 2 (406 aa).

Disordered stretches follow at residues 1-73 and 106-323; these read MAAS…DHLV and VQGG…PQPP. An N-acetylalanine modification is found at A2. Phosphoserine is present on S40. The Nuclear localization signal signature appears at 41 to 47; sequence PEKKRRK. 2 stretches are compositionally biased toward pro residues: residues 131 to 141 and 149 to 158; these read RQPPPFPPNPM and PQGPGYPPPG. Residues 164–179 show a composition bias toward polar residues; it reads SQPFNQPLGQNFSPPS. Residues 236–252 are compositionally biased toward pro residues; it reads SLPPNTSPFPGPDPGFP. The segment covering 285–296 has biased composition (polar residues); that stretch reads NGNQPSFPPNSS. Phosphothreonine is present on T302. The segment at 327-385 adopts a PHD-type zinc-finger fold; that stretch reads VYPCGACRSEVNDDQDAILCEASCQKWFHRECTGMTESAYGLLTTEASAVWACDLCLKT.

Binds to BCL9 via the PHD-type zinc finger motif, and thereby becomes part of the nuclear beta-catenin/TCF complex.

The protein resides in the nucleus. Its function is as follows. Involved in signal transduction through the Wnt pathway. This chain is Pygopus homolog 2 (PYGO2), found in Homo sapiens (Human).